The following is a 593-amino-acid chain: NADH-quinone oxidoreductase subunit C/D 1 (593 aa).

The segment at 1 to 193 is NADH dehydrogenase I subunit C; that stretch reads MPWAKEGDLQ…DNLEGLMNYD (193 aa). Residues 217–593 form an NADH dehydrogenase I subunit D region; it reads AQIVLNWGPL…IDPVVGETDR (377 aa).

This sequence in the N-terminal section; belongs to the complex I 30 kDa subunit family. It in the C-terminal section; belongs to the complex I 49 kDa subunit family. As to quaternary structure, NDH-1 is composed of 13 different subunits. Subunits NuoB, CD, E, F, and G constitute the peripheral sector of the complex.

The protein resides in the cell inner membrane. The enzyme catalyses a quinone + NADH + 5 H(+)(in) = a quinol + NAD(+) + 4 H(+)(out). Functionally, NDH-1 shuttles electrons from NADH, via FMN and iron-sulfur (Fe-S) centers, to quinones in the respiratory chain. The immediate electron acceptor for the enzyme in this species is believed to be ubiquinone. Couples the redox reaction to proton translocation (for every two electrons transferred, four hydrogen ions are translocated across the cytoplasmic membrane), and thus conserves the redox energy in a proton gradient. This is NADH-quinone oxidoreductase subunit C/D 1 (nuoC1) from Aquifex aeolicus (strain VF5).